The chain runs to 901 residues: Cyanophycin synthetase (901 aa).

The ATP-grasp domain maps to 224 to 478; that stretch reads KRILAASGVP…VAGAVMDMLF (255 aa). Residue 493 to 499 participates in ATP binding; the sequence is GTNGKTT.

In the C-terminal section; belongs to the MurCDEF family. Homodimer.

The catalysed reaction is [L-4-(L-arginin-2-N-yl)aspartate](n) + L-aspartate + ATP = [L-4-(L-arginin-2-N-yl)aspartate](n)-L-aspartate + ADP + phosphate + H(+). It catalyses the reaction [L-4-(L-arginin-2-N-yl)aspartate](n)-L-aspartate + L-arginine + ATP = [L-4-(L-arginin-2-N-yl)aspartate](n+1) + ADP + phosphate + H(+). In terms of biological role, catalyzes the ATP-dependent polymerization of arginine and aspartate to multi-L-arginyl-poly-L-aspartic acid (cyanophycin; a water-insoluble reserve polymer). This is Cyanophycin synthetase (cphA) from Nostoc sp. (strain PCC 7120 / SAG 25.82 / UTEX 2576).